A 180-amino-acid polypeptide reads, in one-letter code: Negative modulator of initiation of replication (180 aa).

Residues 87 to 88 are interaction with DNA; sequence AV.

The protein belongs to the SeqA family. In terms of assembly, homodimer. Polymerizes to form helical filaments.

The protein localises to the cytoplasm. Its function is as follows. Negative regulator of replication initiation, which contributes to regulation of DNA replication and ensures that replication initiation occurs exactly once per chromosome per cell cycle. Binds to pairs of hemimethylated GATC sequences in the oriC region, thus preventing assembly of replication proteins and re-initiation at newly replicated origins. Repression is relieved when the region becomes fully methylated. The polypeptide is Negative modulator of initiation of replication (Ferrimonas balearica (strain DSM 9799 / CCM 4581 / KCTC 23876 / PAT)).